Consider the following 657-residue polypeptide: Acetyl-coenzyme A synthetase (657 aa).

CoA-binding positions include arginine 192–lysine 195 and threonine 311. ATP-binding positions include glycine 387 to proline 389, aspartate 411 to threonine 416, aspartate 504, arginine 519, and arginine 530. Histidine 543 and valine 546 together coordinate Mg(2+). CoA is bound at residue arginine 592. Lysine 617 carries the post-translational modification N6-acetyllysine.

The protein belongs to the ATP-dependent AMP-binding enzyme family. Requires Mg(2+) as cofactor. In terms of processing, acetylated. Deacetylation by the SIR2-homolog deacetylase activates the enzyme.

The catalysed reaction is acetate + ATP + CoA = acetyl-CoA + AMP + diphosphate. Catalyzes the conversion of acetate into acetyl-CoA (AcCoA), an essential intermediate at the junction of anabolic and catabolic pathways. AcsA undergoes a two-step reaction. In the first half reaction, AcsA combines acetate with ATP to form acetyl-adenylate (AcAMP) intermediate. In the second half reaction, it can then transfer the acetyl group from AcAMP to the sulfhydryl group of CoA, forming the product AcCoA. The chain is Acetyl-coenzyme A synthetase from Campylobacter jejuni subsp. jejuni serotype O:2 (strain ATCC 700819 / NCTC 11168).